The sequence spans 473 residues: Photosystem II CP43 reaction center protein (473 aa).

Positions 1 to 14 (MKTLYSLRRSYPVE) are excised as a propeptide. At threonine 15 the chain carries N-acetylthreonine. Threonine 15 carries the phosphothreonine modification. A run of 5 helical transmembrane segments spans residues 69 to 93 (LFEVAHFVPEKPMYEQGLILLPHLA), 134 to 155 (LIGPETLEESFPFFGYVWKDRN), 178 to 200 (KALYFGGVYDTWAPGGGDVRKIT), 255 to 275 (KPFAWARRAFVWSGEAYLSYS), and 291 to 312 (WFNNTVYPSEFYGPTGPEASQA). Glutamate 367 is a binding site for [CaMn4O5] cluster. The helical transmembrane segment at 447–471 (RARAAAAGFEKGIDRDFEPVLSMTP) threads the bilayer.

It belongs to the PsbB/PsbC family. PsbC subfamily. In terms of assembly, PSII is composed of 1 copy each of membrane proteins PsbA, PsbB, PsbC, PsbD, PsbE, PsbF, PsbH, PsbI, PsbJ, PsbK, PsbL, PsbM, PsbT, PsbX, PsbY, PsbZ, Psb30/Ycf12, at least 3 peripheral proteins of the oxygen-evolving complex and a large number of cofactors. It forms dimeric complexes. Binds multiple chlorophylls and provides some of the ligands for the Ca-4Mn-5O cluster of the oxygen-evolving complex. It may also provide a ligand for a Cl- that is required for oxygen evolution. PSII binds additional chlorophylls, carotenoids and specific lipids. is required as a cofactor.

The protein localises to the plastid. It is found in the chloroplast thylakoid membrane. One of the components of the core complex of photosystem II (PSII). It binds chlorophyll and helps catalyze the primary light-induced photochemical processes of PSII. PSII is a light-driven water:plastoquinone oxidoreductase, using light energy to abstract electrons from H(2)O, generating O(2) and a proton gradient subsequently used for ATP formation. This is Photosystem II CP43 reaction center protein from Pinus koraiensis (Korean pine).